Here is a 285-residue protein sequence, read N- to C-terminus: Bifunctional protein FolD (285 aa).

Residues 165-167 (GRS) and Ser190 contribute to the NADP(+) site.

The protein belongs to the tetrahydrofolate dehydrogenase/cyclohydrolase family. In terms of assembly, homodimer.

The enzyme catalyses (6R)-5,10-methylene-5,6,7,8-tetrahydrofolate + NADP(+) = (6R)-5,10-methenyltetrahydrofolate + NADPH. It catalyses the reaction (6R)-5,10-methenyltetrahydrofolate + H2O = (6R)-10-formyltetrahydrofolate + H(+). Its pathway is one-carbon metabolism; tetrahydrofolate interconversion. Its function is as follows. Catalyzes the oxidation of 5,10-methylenetetrahydrofolate to 5,10-methenyltetrahydrofolate and then the hydrolysis of 5,10-methenyltetrahydrofolate to 10-formyltetrahydrofolate. The chain is Bifunctional protein FolD from Burkholderia pseudomallei (strain 1106a).